The sequence spans 105 residues: UPF0235 protein Mext_2130 (105 aa).

The protein belongs to the UPF0235 family.

The polypeptide is UPF0235 protein Mext_2130 (Methylorubrum extorquens (strain PA1) (Methylobacterium extorquens)).